The sequence spans 248 residues: Triosephosphate isomerase (248 aa).

9–11 (NWK) contributes to the substrate binding site. The active-site Electrophile is the H101. E170 (proton acceptor) is an active-site residue. Residues G176, S208, and 229 to 230 (GG) each bind substrate.

It belongs to the triosephosphate isomerase family. As to quaternary structure, homodimer.

Its subcellular location is the cytoplasm. The catalysed reaction is D-glyceraldehyde 3-phosphate = dihydroxyacetone phosphate. Its pathway is carbohydrate biosynthesis; gluconeogenesis. It functions in the pathway carbohydrate degradation; glycolysis; D-glyceraldehyde 3-phosphate from glycerone phosphate: step 1/1. Involved in the gluconeogenesis. Catalyzes stereospecifically the conversion of dihydroxyacetone phosphate (DHAP) to D-glyceraldehyde-3-phosphate (G3P). In Mycoplasmopsis pulmonis (strain UAB CTIP) (Mycoplasma pulmonis), this protein is Triosephosphate isomerase.